Reading from the N-terminus, the 470-residue chain is Serine--tRNA ligase (470 aa).

272–274 (TAE) is an L-serine binding site. 303–305 (RAE) contacts ATP. Glu326 lines the L-serine pocket. Position 393 to 396 (393 to 396 (EISS)) interacts with ATP. Residue Ser428 coordinates L-serine.

Belongs to the class-II aminoacyl-tRNA synthetase family. Type-1 seryl-tRNA synthetase subfamily. In terms of assembly, homodimer. The tRNA molecule binds across the dimer.

Its subcellular location is the cytoplasm. The catalysed reaction is tRNA(Ser) + L-serine + ATP = L-seryl-tRNA(Ser) + AMP + diphosphate + H(+). It catalyses the reaction tRNA(Sec) + L-serine + ATP = L-seryl-tRNA(Sec) + AMP + diphosphate + H(+). Its pathway is aminoacyl-tRNA biosynthesis; selenocysteinyl-tRNA(Sec) biosynthesis; L-seryl-tRNA(Sec) from L-serine and tRNA(Sec): step 1/1. Functionally, catalyzes the attachment of serine to tRNA(Ser). Is also able to aminoacylate tRNA(Sec) with serine, to form the misacylated tRNA L-seryl-tRNA(Sec), which will be further converted into selenocysteinyl-tRNA(Sec). This is Serine--tRNA ligase from Nitrobacter hamburgensis (strain DSM 10229 / NCIMB 13809 / X14).